The primary structure comprises 273 residues: Serine acetyltransferase (273 aa).

Belongs to the transferase hexapeptide repeat family. As to quaternary structure, homohexamer. Dimer of a homotrimer.

The protein resides in the cytoplasm. The catalysed reaction is L-serine + acetyl-CoA = O-acetyl-L-serine + CoA. It functions in the pathway amino-acid biosynthesis; L-cysteine biosynthesis; L-cysteine from L-serine: step 1/2. This Shigella flexneri protein is Serine acetyltransferase (cysE).